A 354-amino-acid chain; its full sequence is Uroporphyrinogen decarboxylase (354 aa).

Residues 27–31 (RQAGR), Asp77, Tyr154, Ser209, and His327 contribute to the substrate site.

The protein belongs to the uroporphyrinogen decarboxylase family. In terms of assembly, homodimer.

It is found in the cytoplasm. The catalysed reaction is uroporphyrinogen III + 4 H(+) = coproporphyrinogen III + 4 CO2. It participates in porphyrin-containing compound metabolism; protoporphyrin-IX biosynthesis; coproporphyrinogen-III from 5-aminolevulinate: step 4/4. Its function is as follows. Catalyzes the decarboxylation of four acetate groups of uroporphyrinogen-III to yield coproporphyrinogen-III. The sequence is that of Uroporphyrinogen decarboxylase from Methylobacillus flagellatus (strain ATCC 51484 / DSM 6875 / VKM B-1610 / KT).